A 348-amino-acid chain; its full sequence is Cyclic AMP-dependent transcription factor ATF-4 (348 aa).

Residue K53 forms a Glycyl lysine isopeptide (Lys-Gly) (interchain with G-Cter in SUMO2) linkage. Disordered stretches follow at residues 151–174 (QGAP…TPDH) and 187–265 (PEGD…GEKM). 5 positions are modified to phosphoserine: S211, S215, S220, S227, and S231. The BetaTrCP degron motif motif lies at 211–220 (SDNDSGICMS). The span at 221 to 241 (PDSSLGSPQDSPSTSRGSPNK) shows a compositional bias: polar residues. At P232 the chain carries 4-hydroxyproline. Phosphoserine occurs at positions 242 and 245. The segment covering 242–253 (SLLSPGALSGSS) has biased composition (low complexity). Residues K256, K264, and K269 each participate in a glycyl lysine isopeptide (Lys-Gly) (interchain with G-Cter in SUMO2) cross-link. The 64-residue stretch at 275–338 (LDKKLKKMEQ…QYLKDQIEEV (64 aa)) folds into the bZIP domain. A basic motif region spans residues 277-297 (KKLKKMEQNKTAATRYRQKKR). The interaction with GABBR1 stretch occupies residues 302–338 (ALTGECKELEKKNEALKEKADSLAKEIQYLKDQIEEV). The leucine-zipper stretch occupies residues 303–331 (LTGECKELEKKNEALKEKADSLAKEIQYL). At K308 the chain carries N6-acetyllysine.

The protein belongs to the bZIP family. As to quaternary structure, binds DNA as a homodimer and as a heterodimer. Heterodimer; heterodimerizes with CEBPB. Heterodimer; heterodimerizes with DDIT3/CHOP. Interacts with CEP290 (via an N-terminal region). Interacts with NEK6, DAPK2 (isoform 2) and ZIPK/DAPK3. Interacts (via its leucine zipper domain) with GABBR1 and GABBR2 (via their C-termini). Forms a heterodimer with TXLNG in osteoblasts. Interacts (via its DNA binding domain) with FOXO1 (C-terminal half); the interaction occurs in osteoblasts and regulates glucose homeostasis through suppression of beta-cell proliferation and a decrease in insulin production. Interacts with SATB2; the interaction results in enhanced DNA binding and transactivation by these transcription factors. Interacts with ABRAXAS2. Interacts with TRIB3, inhibiting the transactivation activity of ATF4. Interacts with DISC1; which inhibits ATF4 transcription factor activity by disrupting ATF4 dimerization and DNA-binding. Interacts with EP300/p300; EP300/p300 stabilizes ATF4 and increases its transcriptional activity independently of its catalytic activity by preventing its ubiquitination. Ubiquitinated by SCF(BTRC) in response to mTORC1 signal, followed by proteasomal degradation and leading to down-regulate expression of SIRT4. Interaction with EP300/p300 inhibits ubiquitination by SCF(BTRC). In terms of processing, phosphorylation at Ser-242 by RPS6KA3/RSK2 in osteoblasts enhances transactivation activity and promotes osteoblast differentiation. Phosphorylated on the betaTrCP degron motif at Ser-215, followed by phosphorylation at Ser-220, Ser-227, Ser-231 and Ser-245, promoting interaction with BTRC and ubiquitination. Phosphorylation is promoted by mTORC1. Phosphorylation at Ser-211 by CK2 decreases its stability. Phosphorylated by NEK6. Post-translationally, hydroxylated by PHD3, leading to decreased protein stability.

It localises to the nucleus. The protein resides in the nucleus speckle. Its subcellular location is the cytoplasm. It is found in the cell membrane. The protein localises to the cytoskeleton. It localises to the microtubule organizing center. The protein resides in the centrosome. Functionally, transcription factor that binds the cAMP response element (CRE) (consensus: 5'-GTGACGT[AC][AG]-3') and displays two biological functions, as regulator of metabolic and redox processes under normal cellular conditions, and as master transcription factor during integrated stress response (ISR). Binds to asymmetric CRE's as a heterodimer and to palindromic CRE's as a homodimer. Core effector of the ISR, which is required for adaptation to various stress such as endoplasmic reticulum (ER) stress, amino acid starvation, mitochondrial stress or oxidative stress. During ISR, ATF4 translation is induced via an alternative ribosome translation re-initiation mechanism in response to EIF2S1/eIF-2-alpha phosphorylation, and stress-induced ATF4 acts as a master transcription factor of stress-responsive genes in order to promote cell recovery. Promotes the transcription of genes linked to amino acid sufficiency and resistance to oxidative stress to protect cells against metabolic consequences of ER oxidation. Activates the transcription of NLRP1, possibly in concert with other factors in response to ER stress. Activates the transcription of asparagine synthetase (ASNS) in response to amino acid deprivation or ER stress. However, when associated with DDIT3/CHOP, the transcriptional activation of the ASNS gene is inhibited in response to amino acid deprivation. Together with DDIT3/CHOP, mediates programmed cell death by promoting the expression of genes involved in cellular amino acid metabolic processes, mRNA translation and the terminal unfolded protein response (terminal UPR), a cellular response that elicits programmed cell death when ER stress is prolonged and unresolved. Activates the expression of COX7A2L/SCAF1 downstream of the EIF2AK3/PERK-mediated unfolded protein response, thereby promoting formation of respiratory chain supercomplexes and increasing mitochondrial oxidative phosphorylation. Together with DDIT3/CHOP, activates the transcription of the IRS-regulator TRIB3 and promotes ER stress-induced neuronal cell death by regulating the expression of BBC3/PUMA in response to ER stress. May cooperate with the UPR transcriptional regulator QRICH1 to regulate ER protein homeostasis which is critical for cell viability in response to ER stress. In the absence of stress, ATF4 translation is at low levels and it is required for normal metabolic processes such as embryonic lens formation, fetal liver hematopoiesis, bone development and synaptic plasticity. Acts as a regulator of osteoblast differentiation in response to phosphorylation by RPS6KA3/RSK2: phosphorylation in osteoblasts enhances transactivation activity and promotes expression of osteoblast-specific genes and post-transcriptionally regulates the synthesis of Type I collagen, the main constituent of the bone matrix. Cooperates with FOXO1 in osteoblasts to regulate glucose homeostasis through suppression of beta-cell production and decrease in insulin production. Activates transcription of SIRT4. Regulates the circadian expression of the core clock component PER2 and the serotonin transporter SLC6A4. Binds in a circadian time-dependent manner to the cAMP response elements (CRE) in the SLC6A4 and PER2 promoters and periodically activates the transcription of these genes. Mainly acts as a transcriptional activator in cellular stress adaptation, but it can also act as a transcriptional repressor: acts as a regulator of synaptic plasticity by repressing transcription, thereby inhibiting induction and maintenance of long-term memory. Regulates synaptic functions via interaction with DISC1 in neurons, which inhibits ATF4 transcription factor activity by disrupting ATF4 dimerization and DNA-binding. The protein is Cyclic AMP-dependent transcription factor ATF-4 of Bos taurus (Bovine).